Here is a 65-residue protein sequence, read N- to C-terminus: Conotoxin Lp5.1 (65 aa).

The signal sequence occupies residues 1–22; that stretch reads MRCVPVFIILLLLIPSAPSVDA. Positions 23–50 are excised as a propeptide; that stretch reads QRKTKDDVPLASFHDNAKRTLKRLWNKR.

It belongs to the conotoxin T superfamily. In terms of processing, contains 2 disulfide bonds that can be either 'C1-C3, C2-C4' or 'C1-C4, C2-C3', since these disulfide connectivities have been observed for conotoxins with cysteine framework V (for examples, see AC P0DQQ7 and AC P81755). In terms of tissue distribution, expressed by the venom duct.

It localises to the secreted. This Conus leopardus (Leopard cone) protein is Conotoxin Lp5.1.